The primary structure comprises 298 residues: MYGVGVGGGGGGNYDGGGGNASSLFGGGGFMPSQATNAAEGTSGGGGGFPKSRNAQALLPLTVKQIMDASQTNDDKSNFAVNGMEVSTVRLVGRMLNKLDRVTDVSFTLDDGTGRVPVNRWENDSTDTKEMADIQNGDYVIVNGGLKGFQGKRQVVAYSVRRITNFNDVTHHFLHCVHVHLELTRPKSQVNANTATGTPNQTMPRDSMAYNQSPLTNQASTFSAPQNTGTGTNMIDLVLNVFHDPAVMNDDHGVGVDYVSRRLNLPEETVGKIIIDQVDLGHLYATIDDHHYKSTMNG.

A DNA-binding region (OB) is located at residues 89–163 (VRLVGRMLNK…QVVAYSVRRI (75 aa)).

This sequence belongs to the replication factor A protein 2 family. In terms of assembly, heterotrimer of RPA1, RPA2 and RPA3 (canonical replication protein A complex). Interacts with RPA1A and RPA3. Phosphorylated in a cell-cycle-dependent manner (from the S phase until mitosis). In response to DNA damage, recruited to DNA-repair nuclear foci, as a hypophosphorylated form.

It is found in the nucleus. Its function is as follows. Component of the replication protein A complex (RPA) required for DNA recombination, repair and replication. The activity of RPA is mediated by single-stranded DNA binding and protein interactions. This chain is Replication protein A 32 kDa subunit B (RPA2B), found in Oryza sativa subsp. japonica (Rice).